Consider the following 156-residue polypeptide: ATP synthase subunit b 1 (156 aa).

A helical membrane pass occupies residues 5-27 (FTLISQAMAFAIFIWFTVRFVWP).

It belongs to the ATPase B chain family. F-type ATPases have 2 components, F(1) - the catalytic core - and F(0) - the membrane proton channel. F(1) has five subunits: alpha(3), beta(3), gamma(1), delta(1), epsilon(1). F(0) has three main subunits: a(1), b(2) and c(10-14). The alpha and beta chains form an alternating ring which encloses part of the gamma chain. F(1) is attached to F(0) by a central stalk formed by the gamma and epsilon chains, while a peripheral stalk is formed by the delta and b chains.

The protein resides in the cell inner membrane. F(1)F(0) ATP synthase produces ATP from ADP in the presence of a proton or sodium gradient. F-type ATPases consist of two structural domains, F(1) containing the extramembraneous catalytic core and F(0) containing the membrane proton channel, linked together by a central stalk and a peripheral stalk. During catalysis, ATP synthesis in the catalytic domain of F(1) is coupled via a rotary mechanism of the central stalk subunits to proton translocation. Functionally, component of the F(0) channel, it forms part of the peripheral stalk, linking F(1) to F(0). This is ATP synthase subunit b 1 from Nitrosospira multiformis (strain ATCC 25196 / NCIMB 11849 / C 71).